The following is a 183-amino-acid chain: MTKQPEDWLDDVPGDDIEDEDDEIIWVSKSEIKRDAEELKRLGAELVDLGKNALDKIPLDADLRDAIELAQRIKMEGRRRQLQLIGKMLRQRDVEPIRQALDKLKNRHNQQVVLFHKLEHLRDRLIVEGDDAVAEVLTLWPHADRQQLRSLIRNAKKEKEGNKPPKSARQIFQYLRELAENEG.

The protein belongs to the DarP family.

The protein localises to the cytoplasm. In terms of biological role, member of a network of 50S ribosomal subunit biogenesis factors which assembles along the 30S-50S interface, preventing incorrect 23S rRNA structures from forming. Promotes peptidyl transferase center (PTC) maturation. The polypeptide is Dual-action ribosomal maturation protein DarP (Salmonella enteritidis PT4 (strain P125109)).